We begin with the raw amino-acid sequence, 46 residues long: Lariatin (46 aa).

Residues Met-1 to Ala-26 constitute a propeptide that is removed on maturation. The isoglutamyl glycine isopeptide (Gly-Glu) cross-link spans Gly-27 to Glu-34.

Post-translationally, the linear precursor LarA is probably cleaved by the putative peptidase LarD, generating linear 18-residue Lariatin-A or 20-residue Lariatin-B. These linear peptides are probably cross-linked by LarB. Finally, lariatins A and B may be exported by ABC transporter LarE.

Its function is as follows. Peptide antibiotic with selective activity against Mycobacterium species (M.smegmatis, MIC=3.13 ug/ml and M.tuberculosis, MIC=0.39 ug/ml). it is plausible that the target of lariatins lies within the cell wall in mycobacteria. Functionally, peptide antibiotic with selective activity against Mycobacterium species (M.smegmatis, MIC=6.25 ug/ml). The polypeptide is Lariatin (Rhodococcus jostii).